The sequence spans 156 residues: Small ribosomal subunit protein uS7 (156 aa).

Belongs to the universal ribosomal protein uS7 family. Part of the 30S ribosomal subunit. Contacts proteins S9 and S11.

In terms of biological role, one of the primary rRNA binding proteins, it binds directly to 16S rRNA where it nucleates assembly of the head domain of the 30S subunit. Is located at the subunit interface close to the decoding center, probably blocks exit of the E-site tRNA. The protein is Small ribosomal subunit protein uS7 of Agrobacterium fabrum (strain C58 / ATCC 33970) (Agrobacterium tumefaciens (strain C58)).